We begin with the raw amino-acid sequence, 201 residues long: Inosine triphosphate pyrophosphatase (201 aa).

Residue 13-18 (TGNAKK) coordinates ITP. Glu43 serves as a coordination point for Mg(2+). ITP is bound by residues Lys55, 71–72 (DT), Lys88, 148–151 (FGWD), Lys171, and 176–177 (HR).

The protein belongs to the HAM1 NTPase family. Homodimer. Mg(2+) is required as a cofactor. The cofactor is Mn(2+).

It localises to the cytoplasm. The catalysed reaction is ITP + H2O = IMP + diphosphate + H(+). It catalyses the reaction dITP + H2O = dIMP + diphosphate + H(+). It carries out the reaction XTP + H2O = XMP + diphosphate + H(+). The enzyme catalyses N(6)-hydroxy-dATP + H2O = N(6)-hydroxy-dAMP + diphosphate + H(+). Pyrophosphatase that hydrolyzes the non-canonical purine nucleotides inosine triphosphate (ITP), deoxyinosine triphosphate (dITP) as well as 2'-deoxy-N-6-hydroxylaminopurine triphosphate (dHAPTP) and xanthosine 5'-triphosphate (XTP) to their respective monophosphate derivatives. The enzyme does not distinguish between the deoxy- and ribose forms. Probably excludes non-canonical purines from RNA and DNA precursor pools, thus preventing their incorporation into RNA and DNA and avoiding chromosomal lesions. The sequence is that of Inosine triphosphate pyrophosphatase from Gallus gallus (Chicken).